The sequence spans 166 residues: Large ribosomal subunit protein uL10 (166 aa).

It belongs to the universal ribosomal protein uL10 family. As to quaternary structure, part of the ribosomal stalk of the 50S ribosomal subunit. The N-terminus interacts with L11 and the large rRNA to form the base of the stalk. The C-terminus forms an elongated spine to which L12 dimers bind in a sequential fashion forming a multimeric L10(L12)X complex.

Forms part of the ribosomal stalk, playing a central role in the interaction of the ribosome with GTP-bound translation factors. The sequence is that of Large ribosomal subunit protein uL10 (rplJ) from Streptococcus pyogenes serotype M1.